Reading from the N-terminus, the 328-residue chain is Dof zinc finger protein PBF (328 aa).

Residues 33–56 (RDPKQTRAMPQIGGSGERKPRPQL) are disordered. The Dof-type zinc finger occupies 60-114 (LKCPRCDSNNTKFCYYNNYSMSQPRYFCKACRRYWTHGGTLRNVPIGGGCRKNKH). The Zn(2+) site is built by C62, C65, C87, and C90. Disordered stretches follow at residues 124–144 (TSSS…ASSS) and 306–328 (WNKH…NKGQ).

In terms of assembly, interacts with the bZIP transcription factor Opaque-2/O2. Seed endosperm.

Its subcellular location is the nucleus. Functionally, transcription factor that binds specifically to a 5'-AA[AG]G-3' consensus core sequence. May enhance the DNA binding of the bZIP transcription factor Opaque-2 to O2 binding site elements. The polypeptide is Dof zinc finger protein PBF (PBF) (Zea mays (Maize)).